Here is a 167-residue protein sequence, read N- to C-terminus: NADH-quinone oxidoreductase subunit B (167 aa).

[4Fe-4S] cluster contacts are provided by cysteine 40, cysteine 41, cysteine 105, and cysteine 134.

Belongs to the complex I 20 kDa subunit family. NDH-1 is composed of 14 different subunits. Subunits NuoB, C, D, E, F, and G constitute the peripheral sector of the complex. [4Fe-4S] cluster serves as cofactor.

The protein localises to the cell inner membrane. It catalyses the reaction a quinone + NADH + 5 H(+)(in) = a quinol + NAD(+) + 4 H(+)(out). NDH-1 shuttles electrons from NADH, via FMN and iron-sulfur (Fe-S) centers, to quinones in the respiratory chain. The immediate electron acceptor for the enzyme in this species is believed to be ubiquinone. Couples the redox reaction to proton translocation (for every two electrons transferred, four hydrogen ions are translocated across the cytoplasmic membrane), and thus conserves the redox energy in a proton gradient. The chain is NADH-quinone oxidoreductase subunit B from Campylobacter jejuni subsp. jejuni serotype O:2 (strain ATCC 700819 / NCTC 11168).